The chain runs to 206 residues: Urease accessory protein UreG (206 aa).

Residue Gly-12–Thr-19 participates in GTP binding.

This sequence belongs to the SIMIBI class G3E GTPase family. UreG subfamily. As to quaternary structure, homodimer. UreD, UreF and UreG form a complex that acts as a GTP-hydrolysis-dependent molecular chaperone, activating the urease apoprotein by helping to assemble the nickel containing metallocenter of UreC. The UreE protein probably delivers the nickel.

The protein localises to the cytoplasm. Functionally, facilitates the functional incorporation of the urease nickel metallocenter. This process requires GTP hydrolysis, probably effectuated by UreG. This is Urease accessory protein UreG from Synechocystis sp. (strain ATCC 27184 / PCC 6803 / Kazusa).